The following is a 481-amino-acid chain: Sterol 14-alpha demethylase (481 aa).

A helical transmembrane segment spans residues 1–21; that stretch reads MFIEAIVLALTALILYSVYSV. C422 provides a ligand contact to heme.

Belongs to the cytochrome P450 family. Requires heme as cofactor.

It is found in the membrane. The catalysed reaction is a 14alpha-methyl steroid + 3 reduced [NADPH--hemoprotein reductase] + 3 O2 = a Delta(14) steroid + formate + 3 oxidized [NADPH--hemoprotein reductase] + 4 H2O + 4 H(+). The protein operates within steroid biosynthesis; zymosterol biosynthesis; zymosterol from lanosterol: step 1/6. Its function is as follows. Catalyzes C14-demethylation of lanosterol which is critical for ergosterol biosynthesis. It transforms lanosterol into 4,4'-dimethyl cholesta-8,14,24-triene-3-beta-ol. Favors C4 dimethylated substrates, the substrate preference order is 24-methylenedihydrolanosterol &gt; 24,25-dihydrolanosterol &gt; lanosterol &gt; obtusifoliol &gt; norlanosterol. The polypeptide is Sterol 14-alpha demethylase (Trypanosoma cruzi (strain CL Brener)).